Consider the following 119-residue polypeptide: Large ribosomal subunit protein bL20 (119 aa).

The protein belongs to the bacterial ribosomal protein bL20 family.

Functionally, binds directly to 23S ribosomal RNA and is necessary for the in vitro assembly process of the 50S ribosomal subunit. It is not involved in the protein synthesizing functions of that subunit. The chain is Large ribosomal subunit protein bL20 from Bordetella bronchiseptica (strain ATCC BAA-588 / NCTC 13252 / RB50) (Alcaligenes bronchisepticus).